Here is a 1369-residue protein sequence, read N- to C-terminus: Microtubule-associated tumor suppressor candidate 2 (1369 aa).

7 disordered regions span residues 180-262 (ASSS…TQTV), 374-442 (GRGN…FIPN), 477-509 (GENK…VAEN), 582-627 (NTSP…EERT), 791-839 (RSSA…LRPP), 861-992 (SSVS…QARE), and 1331-1369 (WKLQ…TTPR). Composition is skewed to polar residues over residues 246–262 (PSTS…TQTV) and 392–401 (LHTTPKQGSA). The interval 641–980 (RPKIITYIRR…PKQRTAAARN (340 aa)) is mediates interaction with MAPRE1. The segment at 801-890 (GPITTATSLY…TRSTFGNEEQ (90 aa)) is sufficient for interaction with KIF2C. Residues 801–1150 (GPITTATSLY…HDAALLEMEN (350 aa)) form a localization to the growing distal tip of microtubules region. Polar residues predominate over residues 804 to 814 (TTATSLYSSDP). Residues 821–834 (ASSSNAAKSNLPKS) are compositionally biased toward low complexity. The span at 937–947 (TKKDAQKDQDT) shows a compositional bias: basic and acidic residues. Residues 991 to 1335 (REAERQLVLR…NEELLWKLQT (345 aa)) are a coiled coil. Residues 1348 to 1369 (SPVYRGSSSGPSSPARVSTTPR) show a composition bias toward low complexity.

In the C-terminal section; belongs to the MTUS1 family. Homodimer. Interacts with KIF2C and MAPRE1; the interaction is direct and probably targets MTUS2 and KIF2C to microtubules. As to expression, detected in embryonic stem cells differentiating to cardiomyocytes.

The protein localises to the cytoplasm. It is found in the cytoskeleton. In terms of biological role, binds microtubules. Together with MAPRE1 may target the microtubule depolymerase KIF2C to the plus-end of microtubules. May regulate the dynamics of microtubules at their growing distal tip. The sequence is that of Microtubule-associated tumor suppressor candidate 2 (MTUS2) from Homo sapiens (Human).